The following is a 353-amino-acid chain: Guanine nucleotide-binding protein G(q) subunit alpha (353 aa).

S-palmitoyl cysteine attachment occurs at residues Cys-3 and Cys-4. The region spanning 32–353 (RELKLLLLGT…QLNLKEYNLV (322 aa)) is the G-alpha domain. A G1 motif region spans residues 35–48 (KLLLLGTGESGKST). Residues 40-47 (GTGESGKS), 174-180 (LRVRVPT), 199-203 (DVGGQ), 268-271 (NKKD), and Ala-325 each bind GTP. The Mg(2+) site is built by Ser-47 and Thr-180. The segment at 172–180 (DILRVRVPT) is G2 motif. The tract at residues 195 to 204 (FRMVDVGGQR) is G3 motif. The G4 motif stretch occupies residues 264-271 (ILFLNKKD). The G5 motif stretch occupies residues 323–328 (TCATDT).

This sequence belongs to the G-alpha family. G(q) subfamily. As to quaternary structure, g proteins are composed of 3 units; alpha, beta and gamma. The alpha chain contains the guanine nucleotide binding site.

Functionally, guanine nucleotide-binding proteins (G proteins) are involved as modulators or transducers in various transmembrane signaling systems. This chain is Guanine nucleotide-binding protein G(q) subunit alpha (SCGQA), found in Mizuhopecten yessoensis (Japanese scallop).